The chain runs to 557 residues: CCR4-NOT transcription complex subunit 6 (557 aa).

LRR repeat units follow at residues 52 to 73 (HLTALHLSDNSLSRIPSDIAKL), 75 to 96 (NLVYLDLSSNKIRSLPAELGNM), 98 to 120 (SLRELHLNNNLLRVLPFELGKLF), and 121 to 143 (QLQTLGLKGNPLTQDILNLYQEP). The segment at 153–557 (LLDNLSGTAK…VNGIHLPGRR (405 aa)) is nuclease domain. E240 contributes to the Mg(2+) binding site. 4 residues coordinate substrate: E240, E276, H361, and P366. D412 lines the Mg(2+) pocket. D412 serves as the catalytic Proton donor/acceptor. Substrate contacts are provided by N414, N481, and F486.

This sequence belongs to the CCR4/nocturin family. In terms of assembly, component of the CCR4-NOT complex; distinct complexes seem to exist that differ in the participation of probably mutually exclusive catalytic subunits; the complex contains two deadenylase subunits, CNOT6 or CNOT6L, and CNOT7 or CNOT8. Interacts with CNOT7 and CNOT8. Interacts with UNR. Interacts with ZFP36L1 (via N-terminus). Interacts with ZNF335. Mg(2+) is required as a cofactor.

The protein localises to the cytoplasm. It is found in the nucleus. The catalysed reaction is Exonucleolytic cleavage of poly(A) to 5'-AMP.. Poly(A) nuclease with 3'-5' RNase activity. Catalytic component of the CCR4-NOT complex which is one of the major cellular mRNA deadenylases and is linked to various cellular processes including bulk mRNA degradation, miRNA-mediated repression, translational repression during translational initiation and general transcription regulation. Additional complex functions may be a consequence of its influence on mRNA expression. Involved in mRNA decay mediated by the major-protein-coding determinant of instability (mCRD) of the FOS gene in the cytoplasm. In the presence of ZNF335, enhances ligand-dependent transcriptional activity of nuclear hormone receptors, including RARA. The increase of ligand-dependent ESR1-mediated transcription is much smaller, if any. Mediates cell proliferation and cell survival and prevents cellular senescence. This is CCR4-NOT transcription complex subunit 6 (CNOT6) from Homo sapiens (Human).